The chain runs to 187 residues: Large ribosomal subunit protein uL22 (187 aa).

Belongs to the universal ribosomal protein uL22 family.

This chain is Large ribosomal subunit protein uL22 (RPL17), found in Theileria annulata.